The sequence spans 449 residues: POU domain, class 3, transcription factor 1 (449 aa).

5 disordered regions span residues 1-22, 76-108, 132-152, 184-251, and 393-449; these read MATT…TGPL, GGGG…GGGG, AHHL…HQPQ, GLHH…PSSD, and KRMT…GSVQ. 2 stretches are compositionally biased toward gly residues: residues 11-20 and 93-108; these read GPGGGAGGTG and AGGG…GGGG. A compositionally biased stretch (low complexity) spans 132–143; the sequence is AHHLGPAMSPSP. The segment covering 188–197 has biased composition (basic and acidic residues); it reads ALHEDGHEAQ. The segment covering 218 to 230 has biased composition (low complexity); the sequence is AGGLHAAAAHLHP. The region spanning 245–319 is the POU-specific domain; it reads EDAPSSDDLE…LLNKWLEETD (75 aa). The segment at residues 337-396 is a DNA-binding region (homeobox); it reads KRKKRTSIEVGVKGALESHFLKCPKPSAHEITGLADSLQLEKEVVRVWFCNRRQKEKRMT. Positions 425–434 are enriched in pro residues; the sequence is PSAPPPPPPA.

The protein belongs to the POU transcription factor family. Class-3 subfamily.

Its subcellular location is the nucleus. Its function is as follows. Transcription factor that binds to the octamer motif (5'-ATTTGCAT-3'). Acts as a transcriptional activator when binding cooperatively with SOX4, SOX11, or SOX12 to gene promoters. Acts as a transcriptional repressor of myelin-specific genes. In Mus musculus (Mouse), this protein is POU domain, class 3, transcription factor 1 (Pou3f1).